The following is a 267-amino-acid chain: Putative F-box protein At1g61060 (267 aa).

One can recognise an F-box domain in the interval aspartate 15 to isoleucine 63.

The protein is Putative F-box protein At1g61060 of Arabidopsis thaliana (Mouse-ear cress).